Consider the following 1131-residue polypeptide: MSSLSRELVFLILQFLDEEKFKESVHKLEQESGFFFNIKYFEEKALAGEWDEVEKYLSGFTKVDDNRYSMKIFFEIRKQKYLEALDRNDRAKAVEILAKDLKVFATFNEELYKEITQLLTLENFRENEQLSKYGDTKSARSIMYTELKKLIEANPLFREKLAFPSFKASRLRTLINQSLNWQHQLCKNPRPNPDIKTLFLDHSCSPSNGARALTPVNLPVAAVARPSNFVPLGVHGGPFQSNPAPAPNANALAGWMANPNPSSSVPSGVVAASPFPMQPSQVNELKHPRAPSNSLGLMDYQSADHEQLMKRLRSAQTSNEVTYPAHSHPPASLDDLPRNVVSTIRQGSVVISMDFHPSHHTLLAVGCSSGEVTLWEVGSREKVVTEPFKIWNMAACSVIFQGSIVKEPSISVTRVAWSPDGNLLGVSFTKHLIHVYAYQGSDLRQHLEIDAHVGCVNDLAFAHPNKQMCVVTCGDDKLIKVWDLSGKKLFTFEGHEAPVYSICPHQKENIQFIFSTALDGKIKAWLYDNVGSRVDYDAPGQWCTTMLYSADGSRLFSCGTSKEGDSFLVEWNESEGALKRTYLGFRKKSAGVVQFDTTRNRFLAVGEDNQIKFWNMDNTNLLTVVEAEGGLPNLPRLRFNKDGNLLAVTTADNGFKILANTDGLRTLRAFEARSFEASKASIDMKVSTSAMASSISPAIGKIEHMDAGSPARPTPIPNGIEAMSRTMEKPRNLDSVDKSKPLELTEIVDPTQCRQVTMPDSKDSVSKVARLLYTNSGVGVLALGSNGVQRLWKWIRNEQNPTGKATASVTPQHWQPNSGLLMANDVPENPEGSVPCIALSKNDSYVMSACGGKVSLFNMMTFKVMTTFMPPPPASTFLAFHPQDNNIIAIGMEDSSIHIYNVRVDEVKTKLKGHQKHITGLAFSTALNILVSSGADAQLFFWTADSWEKKKSSAIQLPPGKAPVGDTRVQFHNDQIQLLVSHETQLAIYDASKMECIHKWVPQEALSSPITSASYSCNSQLVYASFADGNIAVFDAESLRLRCRIAPSAYMPQPTPNSAPIFPQVITAHPQEPNQLAVGLSDGSVKVIEPSELSRRWGVGVAAGSDKAGTENGRPSSSSAANNSSSDQIQR.

The 33-residue stretch at 4–36 folds into the LisH domain; it reads LSRELVFLILQFLDEEKFKESVHKLEQESGFFF. The CTLH domain occupies 34 to 92; it reads FFFNIKYFEEKALAGEWDEVEKYLSGFTKVDDNRYSMKIFFEIRKQKYLEALDRNDRAK. T214 is subject to Phosphothreonine. 12 WD repeats span residues 345-385, 407-446, 451-493, 495-535, 585-624, 629-668, 763-802, 829-867, 870-910, 913-952, 959-999, and 1005-1044; these read RQGS…KVVT, EPSISVTRVAWSPDGNLLGVSFTKHLIHVYAYQGSDLRQH, AHVG…FTFE, HEAP…SRVD, FRKKSAGVVQFDTTRNRFLAVGEDNQIKFWNMDNTNLLTV, GGLPNLPRLRFNKDGNLLAVTTADNGFKILANTDGLRTLR, DSVSKVARLLYTNSGVGVLALGSNGVQRLWKWIRNEQNPT, NPEGSVPCIALSKNDSYVMSACGGKVSLFNMMTFKVMTT, PPPP…VKTK, GHQKHITGLAFSTALNILVSSGADAQLFFWTADSWEKKKS, PGKA…CIHK, and ALSSPITSASYSCNSQLVYASFADGNIAVFDAESLRLRCR. A disordered region spans residues 1099–1131; that stretch reads VGVAAGSDKAGTENGRPSSSSAANNSSSDQIQR. Over residues 1116–1131 the composition is skewed to low complexity; the sequence is SSSSAANNSSSDQIQR.

Tetramer. Interacts with NINJA/AFPH2. Interacts with SMXL6, SMXL7 and SMXL8. Interacts with SPL (via EAR motif). Interacts with SPEAR3/TIE1.

It is found in the nucleus. Transcriptional corepressor. Negative regulator of jasmonate responses. This chain is Topless-related protein 2 (TPR2), found in Arabidopsis thaliana (Mouse-ear cress).